Reading from the N-terminus, the 433-residue chain is Probable dipeptidase (433 aa).

Residue Cys20 is part of the active site.

The protein belongs to the peptidase C69 family.

It carries out the reaction an L-aminoacyl-L-amino acid + H2O = 2 an L-alpha-amino acid. This Salmonella dublin protein is Probable dipeptidase (pipD).